Here is a 115-residue protein sequence, read N- to C-terminus: UPF0102 protein NGO_1987 (115 aa).

Belongs to the UPF0102 family.

The chain is UPF0102 protein NGO_1987 from Neisseria gonorrhoeae (strain ATCC 700825 / FA 1090).